Reading from the N-terminus, the 499-residue chain is Glucooligosaccharide oxidase (499 aa).

A signal peptide spans Met1 to Arg25. A disulfide bridge connects residues Cys31 and Cys80. The FAD-binding PCMH-type domain maps to Val58–Ala230. A cross-link (6-(S-cysteinyl)-8alpha-(pros-histidyl)-FAD (His-Cys)) is located at residues His95–Cys155. Positions 97, 154, and 270 each coordinate substrate. N-linked (GlcNAc...) asparagine glycans are attached at residues Asn330 and Asn366. Substrate contacts are provided by Gln378 and Gln409. An N-linked (GlcNAc...) asparagine glycan is attached at Asn419. Residue Tyr454 participates in substrate binding. Tyr454 functions as the Proton acceptor in the catalytic mechanism.

It belongs to the oxygen-dependent FAD-linked oxidoreductase family. FAD is required as a cofactor. Post-translationally, the FAD cofactor is bound via a bicovalent 6-S-cysteinyl, 8alpha-N1-histidyl FAD linkage.

It is found in the secreted. It carries out the reaction beta-lactose + O2 = lactobiono-1,5-lactone + H2O2. It catalyses the reaction D-cellobiose + O2 = D-cellobiono-1,5-lactone + H2O2. The enzyme catalyses D-cellotriose + O2 = D-cellotriono-1,5-lactone + H2O2. The catalysed reaction is D-cellotetraose + O2 = D-cellotetraono-1,5-lactone + H2O2. It carries out the reaction D-cellopentaose + O2 = D-cellopentaono-1,5-lactone + H2O2. It catalyses the reaction D-cellohexaose + O2 = D-cellohexaono-1,5-lactone + H2O2. In terms of biological role, catalyzes the selective oxidation of C1 hydroxyl moieties on mono- and disaccharides with concomitant reduction of molecular oxygen to hydrogen peroxide. This results in the formation of the corresponding lactones, which typically undergo spontaneous hydrolysis. Glucooligosaccharide oxidase is able to oxidize the monosaccharide D-glucose as well as the disaccharides maltose, cellobiose, and lactose. In addition, it shows high selectivity for cello- and maltooligosaccharides, indicating that glucooligosaccharide oxidase prefers oligosaccharides with a beta-D-glucosyl unit on the reducing end and additional sugar units linked by alpha- or beta-1,4 glucosidic bonds. This Sarocladium strictum (Black bundle disease fungus) protein is Glucooligosaccharide oxidase (gluO).